The sequence spans 317 residues: 4-hydroxy-3-methylbut-2-enyl diphosphate reductase (317 aa).

Cys12 is a [4Fe-4S] cluster binding site. His41 and His74 together coordinate (2E)-4-hydroxy-3-methylbut-2-enyl diphosphate. Positions 41 and 74 each coordinate dimethylallyl diphosphate. Isopentenyl diphosphate is bound by residues His41 and His74. Cys97 contributes to the [4Fe-4S] cluster binding site. His125 contacts (2E)-4-hydroxy-3-methylbut-2-enyl diphosphate. Dimethylallyl diphosphate is bound at residue His125. Isopentenyl diphosphate is bound at residue His125. Residue Glu127 is the Proton donor of the active site. Thr168 is a (2E)-4-hydroxy-3-methylbut-2-enyl diphosphate binding site. Cys198 contacts [4Fe-4S] cluster. 4 residues coordinate (2E)-4-hydroxy-3-methylbut-2-enyl diphosphate: Ser226, Ser227, Asn228, and Ser270. Dimethylallyl diphosphate-binding residues include Ser226, Ser227, Asn228, and Ser270. Residues Ser226, Ser227, Asn228, and Ser270 each contribute to the isopentenyl diphosphate site.

The protein belongs to the IspH family. Homodimer. The cofactor is [4Fe-4S] cluster.

It catalyses the reaction isopentenyl diphosphate + 2 oxidized [2Fe-2S]-[ferredoxin] + H2O = (2E)-4-hydroxy-3-methylbut-2-enyl diphosphate + 2 reduced [2Fe-2S]-[ferredoxin] + 2 H(+). It carries out the reaction dimethylallyl diphosphate + 2 oxidized [2Fe-2S]-[ferredoxin] + H2O = (2E)-4-hydroxy-3-methylbut-2-enyl diphosphate + 2 reduced [2Fe-2S]-[ferredoxin] + 2 H(+). It functions in the pathway isoprenoid biosynthesis; dimethylallyl diphosphate biosynthesis; dimethylallyl diphosphate from (2E)-4-hydroxy-3-methylbutenyl diphosphate: step 1/1. It participates in isoprenoid biosynthesis; isopentenyl diphosphate biosynthesis via DXP pathway; isopentenyl diphosphate from 1-deoxy-D-xylulose 5-phosphate: step 6/6. Functionally, catalyzes the conversion of 1-hydroxy-2-methyl-2-(E)-butenyl 4-diphosphate (HMBPP) into a mixture of isopentenyl diphosphate (IPP) and dimethylallyl diphosphate (DMAPP). Acts in the terminal step of the DOXP/MEP pathway for isoprenoid precursor biosynthesis. The polypeptide is 4-hydroxy-3-methylbut-2-enyl diphosphate reductase (Yersinia enterocolitica serotype O:8 / biotype 1B (strain NCTC 13174 / 8081)).